A 227-amino-acid polypeptide reads, in one-letter code: Cytochrome c oxidase subunit 2 (227 aa).

The Mitochondrial intermembrane segment spans residues 1–14; sequence MAYPMQLGFQDATS. Residues 15 to 45 form a helical membrane-spanning segment; that stretch reads PIMEELLHFHDHTLMIVFLISSLVLYIISLM. The Mitochondrial matrix portion of the chain corresponds to 46–59; sequence LTTKLTHTSTMDAQ. Residues 60–87 form a helical membrane-spanning segment; that stretch reads EVETIWTILPAIILILIALPSLRILYMM. Residues 88 to 227 are Mitochondrial intermembrane-facing; it reads DEINNPSLTV…YFEKWSASML (140 aa). Cu cation-binding residues include histidine 161, cysteine 196, glutamate 198, cysteine 200, histidine 204, and methionine 207. Glutamate 198 is a binding site for Mg(2+). Tyrosine 218 is modified (phosphotyrosine).

Belongs to the cytochrome c oxidase subunit 2 family. Component of the cytochrome c oxidase (complex IV, CIV), a multisubunit enzyme composed of 14 subunits. The complex is composed of a catalytic core of 3 subunits MT-CO1, MT-CO2 and MT-CO3, encoded in the mitochondrial DNA, and 11 supernumerary subunits COX4I, COX5A, COX5B, COX6A, COX6B, COX6C, COX7A, COX7B, COX7C, COX8 and NDUFA4, which are encoded in the nuclear genome. The complex exists as a monomer or a dimer and forms supercomplexes (SCs) in the inner mitochondrial membrane with NADH-ubiquinone oxidoreductase (complex I, CI) and ubiquinol-cytochrome c oxidoreductase (cytochrome b-c1 complex, complex III, CIII), resulting in different assemblies (supercomplex SCI(1)III(2)IV(1) and megacomplex MCI(2)III(2)IV(2)). Found in a complex with TMEM177, COA6, COX18, COX20, SCO1 and SCO2. Interacts with TMEM177 in a COX20-dependent manner. Interacts with COX20. Interacts with COX16. Requires Cu cation as cofactor.

Its subcellular location is the mitochondrion inner membrane. It carries out the reaction 4 Fe(II)-[cytochrome c] + O2 + 8 H(+)(in) = 4 Fe(III)-[cytochrome c] + 2 H2O + 4 H(+)(out). Component of the cytochrome c oxidase, the last enzyme in the mitochondrial electron transport chain which drives oxidative phosphorylation. The respiratory chain contains 3 multisubunit complexes succinate dehydrogenase (complex II, CII), ubiquinol-cytochrome c oxidoreductase (cytochrome b-c1 complex, complex III, CIII) and cytochrome c oxidase (complex IV, CIV), that cooperate to transfer electrons derived from NADH and succinate to molecular oxygen, creating an electrochemical gradient over the inner membrane that drives transmembrane transport and the ATP synthase. Cytochrome c oxidase is the component of the respiratory chain that catalyzes the reduction of oxygen to water. Electrons originating from reduced cytochrome c in the intermembrane space (IMS) are transferred via the dinuclear copper A center (CU(A)) of subunit 2 and heme A of subunit 1 to the active site in subunit 1, a binuclear center (BNC) formed by heme A3 and copper B (CU(B)). The BNC reduces molecular oxygen to 2 water molecules using 4 electrons from cytochrome c in the IMS and 4 protons from the mitochondrial matrix. This Bison bonasus (European bison) protein is Cytochrome c oxidase subunit 2 (MT-CO2).